The primary structure comprises 386 residues: Leupaxin (386 aa).

Met1 bears the N-acetylmethionine mark. Residues 3–15 carry the LD motif 1 motif; the sequence is ELDALLEELERCT. Residue Ser19 is modified to Phosphoserine. The disordered stretch occupies residues 19-52; the sequence is SEEYSNPVSCHLDQQSTEESKIPQTPKTLSSQGN. Residue Tyr22 is modified to Phosphotyrosine. The segment covering 22 to 52 has biased composition (polar residues); that stretch reads YSNPVSCHLDQQSTEESKIPQTPKTLSSQGN. Ser54 is modified (phosphoserine). Phosphotyrosine is present on Tyr62. Short sequence motifs (LD motif) lie at residues 70 to 82 and 92 to 103; these read NVYSEVQEPKESV and QLDELMAHLSEM. Tyr72 carries the phosphotyrosine; by LYN modification. Residue Ser81 is modified to Phosphoserine. LIM zinc-binding domains are found at residues 150–208, 209–267, 268–326, and 327–386; these read GYCA…RLFS, PRCA…AMFS, PKCG…HRRG, and TLCH…LFSQ.

This sequence belongs to the paxillin family. As to quaternary structure, interacts with unphosphorylated ITGA4. Interacts with AR and SRF. Interacts with PTK2B/PYK2, PTPN22 and PTPN12. Interacts (via LD motif 3) with LYN and the interaction is induced upon B-cell antigen receptor (BCR) activation. Interacts (via LD motif 3) with PTK2/FAK. In terms of processing, phosphorylated on tyrosine residues. Phosphorylation on Tyr-72 is important for its inhibitory function. Bombesin stimulates phosphorylation on Tyr-22, Tyr-62 and Tyr-72. As to expression, expressed in osteoclasts (at protein level). Highly expressed in vascular smooth muscle.

Its subcellular location is the cytoplasm. It localises to the cell junction. It is found in the focal adhesion. The protein localises to the nucleus. The protein resides in the perinuclear region. Its subcellular location is the cell projection. It localises to the podosome. It is found in the cell membrane. Transcriptional coactivator for androgen receptor (AR) and serum response factor (SRF). Contributes to the regulation of cell adhesion, spreading and cell migration and acts as a negative regulator in integrin-mediated cell adhesion events. Suppresses the integrin-induced tyrosine phosphorylation of paxillin (PXN). May play a critical role as an adapter protein in the formation of the adhesion zone in osteoclasts. Negatively regulates B-cell antigen receptor (BCR) signaling. The chain is Leupaxin (Lpxn) from Mus musculus (Mouse).